A 345-amino-acid polypeptide reads, in one-letter code: Uroporphyrinogen decarboxylase (345 aa).

Substrate is bound by residues 26–30, Asp-76, Tyr-151, Ser-205, and His-321; that span reads RQAGR.

The protein belongs to the uroporphyrinogen decarboxylase family. As to quaternary structure, homodimer.

It localises to the cytoplasm. It catalyses the reaction uroporphyrinogen III + 4 H(+) = coproporphyrinogen III + 4 CO2. It participates in porphyrin-containing compound metabolism; protoporphyrin-IX biosynthesis; coproporphyrinogen-III from 5-aminolevulinate: step 4/4. In terms of biological role, catalyzes the decarboxylation of four acetate groups of uroporphyrinogen-III to yield coproporphyrinogen-III. The sequence is that of Uroporphyrinogen decarboxylase from Phenylobacterium zucineum (strain HLK1).